Reading from the N-terminus, the 239-residue chain is Ubiquinone biosynthesis O-methyltransferase (239 aa).

Arg44, Gly63, Asp84, and Met128 together coordinate S-adenosyl-L-methionine.

Belongs to the methyltransferase superfamily. UbiG/COQ3 family.

It catalyses the reaction a 3-demethylubiquinol + S-adenosyl-L-methionine = a ubiquinol + S-adenosyl-L-homocysteine + H(+). The enzyme catalyses a 3-(all-trans-polyprenyl)benzene-1,2-diol + S-adenosyl-L-methionine = a 2-methoxy-6-(all-trans-polyprenyl)phenol + S-adenosyl-L-homocysteine + H(+). It participates in cofactor biosynthesis; ubiquinone biosynthesis. Its function is as follows. O-methyltransferase that catalyzes the 2 O-methylation steps in the ubiquinone biosynthetic pathway. The sequence is that of Ubiquinone biosynthesis O-methyltransferase from Xanthomonas euvesicatoria pv. vesicatoria (strain 85-10) (Xanthomonas campestris pv. vesicatoria).